The primary structure comprises 444 residues: tRNA-2-methylthio-N(6)-dimethylallyladenosine synthase (444 aa).

The region spanning 8-122 is the MTTase N-terminal domain; the sequence is KTFYIETFGC…LAEMLVQIES (115 aa). Cysteine 17, cysteine 53, cysteine 85, cysteine 160, cysteine 164, and cysteine 167 together coordinate [4Fe-4S] cluster. The 231-residue stretch at 146–376 folds into the Radical SAM core domain; that stretch reads RGNAHRGYIT…MEHQREIQRA (231 aa). The region spanning 379-444 is the TRAM domain; it reads RKHIGETIEV…PNSLVGELVG (66 aa).

This sequence belongs to the methylthiotransferase family. MiaB subfamily. As to quaternary structure, monomer. [4Fe-4S] cluster serves as cofactor.

It is found in the cytoplasm. The enzyme catalyses N(6)-dimethylallyladenosine(37) in tRNA + (sulfur carrier)-SH + AH2 + 2 S-adenosyl-L-methionine = 2-methylsulfanyl-N(6)-dimethylallyladenosine(37) in tRNA + (sulfur carrier)-H + 5'-deoxyadenosine + L-methionine + A + S-adenosyl-L-homocysteine + 2 H(+). Its function is as follows. Catalyzes the methylthiolation of N6-(dimethylallyl)adenosine (i(6)A), leading to the formation of 2-methylthio-N6-(dimethylallyl)adenosine (ms(2)i(6)A) at position 37 in tRNAs that read codons beginning with uridine. This Koribacter versatilis (strain Ellin345) protein is tRNA-2-methylthio-N(6)-dimethylallyladenosine synthase.